The primary structure comprises 158 residues: Phosphopantetheine adenylyltransferase (158 aa).

Threonine 10 serves as a coordination point for substrate. ATP is bound by residues 10-11 and histidine 18; that span reads TF. Substrate is bound by residues lysine 42, leucine 74, and arginine 88. ATP-binding positions include 89-91, glutamate 99, and 124-130; these read GLR and NSFISST.

Belongs to the bacterial CoaD family. In terms of assembly, homohexamer. The cofactor is Mg(2+).

Its subcellular location is the cytoplasm. The catalysed reaction is (R)-4'-phosphopantetheine + ATP + H(+) = 3'-dephospho-CoA + diphosphate. The protein operates within cofactor biosynthesis; coenzyme A biosynthesis; CoA from (R)-pantothenate: step 4/5. Functionally, reversibly transfers an adenylyl group from ATP to 4'-phosphopantetheine, yielding dephospho-CoA (dPCoA) and pyrophosphate. The polypeptide is Phosphopantetheine adenylyltransferase (Shewanella loihica (strain ATCC BAA-1088 / PV-4)).